The following is a 153-amino-acid chain: Holo-[acyl-carrier-protein] synthase (153 aa).

Residues aspartate 24 and glutamate 78 each coordinate Mg(2+).

It belongs to the P-Pant transferase superfamily. AcpS family. Mg(2+) is required as a cofactor.

Its subcellular location is the cytoplasm. It carries out the reaction apo-[ACP] + CoA = holo-[ACP] + adenosine 3',5'-bisphosphate + H(+). Transfers the 4'-phosphopantetheine moiety from coenzyme A to a Ser of acyl-carrier-protein. The sequence is that of Holo-[acyl-carrier-protein] synthase from Bordetella parapertussis (strain 12822 / ATCC BAA-587 / NCTC 13253).